A 122-amino-acid polypeptide reads, in one-letter code: Large ribosomal subunit protein uL14 (122 aa).

It belongs to the universal ribosomal protein uL14 family. Part of the 50S ribosomal subunit. Forms a cluster with proteins L3 and L19. In the 70S ribosome, L14 and L19 interact and together make contacts with the 16S rRNA in bridges B5 and B8.

In terms of biological role, binds to 23S rRNA. Forms part of two intersubunit bridges in the 70S ribosome. This is Large ribosomal subunit protein uL14 from Gluconacetobacter diazotrophicus (strain ATCC 49037 / DSM 5601 / CCUG 37298 / CIP 103539 / LMG 7603 / PAl5).